Here is an 84-residue protein sequence, read N- to C-terminus: Metallothionein-like protein 4A (84 aa).

The tract at residues 1 to 26 is disordered; that stretch reads MADTGKGSSVAGCNDSCGCPSPCPGG.

It belongs to the metallothionein superfamily. Type 15 family. As to expression, expressed specifically in seeds.

The protein resides in the cytoplasm. It is found in the nucleus. The protein localises to the cell membrane. Its function is as follows. Metallothioneins have a high content of cysteine residues that bind various heavy metals. Functions as a metal chelator of copper (Cu) and zinc (Zn). Plays a role in storing and distributing Zn ion in seed. This Arabidopsis thaliana (Mouse-ear cress) protein is Metallothionein-like protein 4A (MT4A).